A 210-amino-acid chain; its full sequence is Fibrillarin-like rRNA/tRNA 2'-O-methyltransferase (210 aa).

Residues threonine 72–threonine 73, glutamate 88–phenylalanine 89, aspartate 113–alanine 114, and aspartate 134–threonine 137 each bind S-adenosyl-L-methionine.

It belongs to the methyltransferase superfamily. Fibrillarin family. In terms of assembly, interacts with nop5. Component of box C/D small ribonucleoprotein (sRNP) particles that contain rpl7ae, FlpA and nop5, plus a guide RNA.

Involved in pre-rRNA and tRNA processing. Utilizes the methyl donor S-adenosyl-L-methionine to catalyze the site-specific 2'-hydroxyl methylation of ribose moieties in rRNA and tRNA. Site specificity is provided by a guide RNA that base pairs with the substrate. Methylation occurs at a characteristic distance from the sequence involved in base pairing with the guide RNA. This Halobacterium salinarum (strain ATCC 29341 / DSM 671 / R1) protein is Fibrillarin-like rRNA/tRNA 2'-O-methyltransferase.